The following is a 185-amino-acid chain: HTH-type transcriptional regulator Hpr (185 aa).

One can recognise an HTH marR-type domain in the interval 13-157 (AMIFSQRIAQ…LIAILRNIYG (145 aa)). Residues 63-86 (ISEIAKFGVMHVSTAFNFSKKLEE) constitute a DNA-binding region (H-T-H motif).

In terms of assembly, homodimer.

In terms of biological role, negative regulator of protease production and sporulation. The sequence is that of HTH-type transcriptional regulator Hpr from Bacillus anthracis (strain CDC 684 / NRRL 3495).